The sequence spans 416 residues: Neamine transaminase NeoN (416 aa).

The residue at position 231 (Lys231) is an N6-(pyridoxal phosphate)lysine.

Belongs to the class-III pyridoxal-phosphate-dependent aminotransferase family. The cofactor is pyridoxal 5'-phosphate.

It catalyses the reaction neomycin C + 2-oxoglutarate = 6'''-deamino-6'''-oxoneomycin C + L-glutamate. The enzyme catalyses neamine + 2-oxoglutarate = 6'-oxoparomamine + L-glutamate. It functions in the pathway antibiotic biosynthesis; neomycin biosynthesis. Functionally, 6'-oxoglucosaminyl:L-glutamate aminotransferase that catalyzes pyridoxal-5'-phosphate-mediated transamination for the conversion of paromamine to neamine in the biosynthetic pathway of neomycin. Also able to catalyze deamination at C-6''' of neomycin. The protein is Neamine transaminase NeoN (neoN) of Streptomyces fradiae (Streptomyces roseoflavus).